We begin with the raw amino-acid sequence, 108 residues long: UPF0145 protein LACR_1006 (108 aa).

Belongs to the UPF0145 family.

This is UPF0145 protein LACR_1006 from Lactococcus lactis subsp. cremoris (strain SK11).